The primary structure comprises 282 residues: Pantothenate synthetase (282 aa).

An ATP-binding site is contributed by 30 to 37; sequence MGYLHAGH. His37 acts as the Proton donor in catalysis. A (R)-pantoate-binding site is contributed by Gln61. Beta-alanine is bound at residue Gln61. Residue 147 to 150 coordinates ATP; it reads GKKD. Gln153 contacts (R)-pantoate. ATP is bound by residues Val176 and 184–187; that span reads MSSR.

Belongs to the pantothenate synthetase family. Homodimer.

It localises to the cytoplasm. The catalysed reaction is (R)-pantoate + beta-alanine + ATP = (R)-pantothenate + AMP + diphosphate + H(+). Its pathway is cofactor biosynthesis; (R)-pantothenate biosynthesis; (R)-pantothenate from (R)-pantoate and beta-alanine: step 1/1. Its function is as follows. Catalyzes the condensation of pantoate with beta-alanine in an ATP-dependent reaction via a pantoyl-adenylate intermediate. This chain is Pantothenate synthetase, found in Geotalea uraniireducens (strain Rf4) (Geobacter uraniireducens).